Consider the following 185-residue polypeptide: Ribosome-recycling factor (185 aa).

Belongs to the RRF family.

It is found in the cytoplasm. Responsible for the release of ribosomes from messenger RNA at the termination of protein biosynthesis. May increase the efficiency of translation by recycling ribosomes from one round of translation to another. In Geobacillus sp. (strain WCH70), this protein is Ribosome-recycling factor.